Here is a 214-residue protein sequence, read N- to C-terminus: Ribosomal RNA small subunit methyltransferase G (214 aa).

Residues Gly58, 109–110 (AE), and Arg126 each bind S-adenosyl-L-methionine.

The protein belongs to the methyltransferase superfamily. RNA methyltransferase RsmG family.

The protein resides in the cytoplasm. Specifically methylates the N7 position of a guanine in 16S rRNA. This Ureaplasma parvum serovar 3 (strain ATCC 700970) protein is Ribosomal RNA small subunit methyltransferase G.